The primary structure comprises 154 residues: Catabolic 3-dehydroquinase (154 aa).

Tyr25 acts as the Proton acceptor in catalysis. Residues Asn79, His85, and Asp92 each coordinate substrate. The active-site Proton donor is His105. Substrate contacts are provided by residues 106 to 107 and Arg116; that span reads IS.

This sequence belongs to the type-II 3-dehydroquinase family. Homododecamer. Adopts a ring-like structure, composed of an arrangement of two hexameric rings stacked on top of one another.

It catalyses the reaction 3-dehydroquinate = 3-dehydroshikimate + H2O. Its pathway is aromatic compound metabolism; 3,4-dihydroxybenzoate biosynthesis; 3,4-dihydroxybenzoate from 3-dehydroquinate: step 1/2. Is involved in the catabolism of quinate. Allows the utilization of quinate as carbon source via the beta-ketoadipate pathway. In Botryotinia fuckeliana (strain B05.10) (Noble rot fungus), this protein is Catabolic 3-dehydroquinase.